The following is a 512-amino-acid chain: MKAIIHLTLLALLSVNTATNQGNSADAVTTTETATSGPTVAAADTTETNFPETASTTANTPSFPTATSPAPPIISTHSSSTIPTPAPPIISTHSSSTIPIPTAADSESTTNVNSLATSDIITASSPNDGLITMVPSETQSNNEMSPTTEDNQSSGPPTGTALLETSTLNSTGPSNPCQDDPCADNSLCVKLHNTSFCLCLEGYYYNSSTCKKGKVFPGKISVTVSETFDPEEKHSMAYQDLHSEITSLFKDVFGTSVYGQTVILTVSTSLSPRSEMRADDKFVNVTIVTILAETTSDNEKTVTEKINKAIRSSSSNFLNYDLTLRCDYYGCNQTADDCLNGLACDCKSDLQRPNPQSPFCVASSLKCPDACNAQHKQCLIKKSGGAPECACVPGYQEDANGNCQKCAFGYSGLDCKDKFQLILTIVGTIAGIVILSMIIALIVTARSNNKTKHIEEENLIDEDFQNLKLRSTGFTNLGAEGSVFPKVRITASRDSQMQNPYSRHSSMPRPDY.

The first 18 residues, Met1–Ala18, serve as a signal peptide directing secretion. Residues Thr19–Leu421 are Extracellular-facing. The span at Gly22–Pro38 shows a compositional bias: polar residues. 2 disordered regions span residues Gly22–Thr67 and Met133–Pro176. Residues Thr53–Thr67 show a composition bias toward low complexity. A compositionally biased stretch (polar residues) spans Pro135–Pro176. 2 N-linked (GlcNAc...) asparagine glycosylation sites follow: Asn151 and Asn169. An EGF-like 1 domain is found at Pro173–Lys211. Intrachain disulfides connect Cys177-Cys188, Cys182-Cys197, and Cys199-Cys210. 4 N-linked (GlcNAc...) asparagine glycosylation sites follow: Asn193, Asn206, Asn284, and Asn332. One can recognise an SEA domain in the interval Lys212–Asp336. EGF-like domains are found at residues Leu322–Val361 and Ser363–Gln404. Disulfide bonds link Cys326/Cys338, Cys331/Cys344, Cys346/Cys360, Cys367/Cys378, Cys371/Cys389, and Cys391/Cys403. Residues Ile422–Ile442 form a helical membrane-spanning segment. Residues Val443–Tyr512 are Cytoplasmic-facing. Over residues Arg493–Ser505 the composition is skewed to polar residues. Positions Arg493–Tyr512 are disordered.

Homodimer of beta subunits. Cleaved into two subunits, alpha and beta, probably between the first EGF domain and the SEA domain. Beta subunit contains the cytoplasmic tail and alpha subunit the extracellular tail. The homooligomerization into dimers is dependent on intrachain disulfide bonds. In terms of processing, highly N-glycosylated. In terms of tissue distribution, highly expressed in epithelial tissues, particularly those of the gastrointestinal and respiratory tracts, such as large intestine and trachea, followed by kidney, small intestine, appendix and stomach.

It localises to the cell membrane. The protein localises to the apical cell membrane. It is found in the secreted. Functionally, epithelial and hemopoietic transmembrane mucin that may play a role in cell signaling. The sequence is that of Mucin-13 (MUC13) from Homo sapiens (Human).